A 450-amino-acid chain; its full sequence is Tubulin alpha chain (450 aa).

Glutamine 11 serves as a coordination point for GTP. Lysine 40 carries the N6-acetyllysine modification. GTP is bound by residues glutamate 71, serine 140, glycine 144, threonine 145, threonine 179, asparagine 206, and asparagine 228. Residue glutamate 71 participates in Mg(2+) binding. The active site involves glutamate 254.

This sequence belongs to the tubulin family. Dimer of alpha and beta chains. A typical microtubule is a hollow water-filled tube with an outer diameter of 25 nm and an inner diameter of 15 nM. Alpha-beta heterodimers associate head-to-tail to form protofilaments running lengthwise along the microtubule wall with the beta-tubulin subunit facing the microtubule plus end conferring a structural polarity. Microtubules usually have 13 protofilaments but different protofilament numbers can be found in some organisms and specialized cells. Requires Mg(2+) as cofactor. In terms of processing, acetylation of alpha chains at Lys-40 stabilizes microtubules and affects affinity and processivity of microtubule motors. This modification has a role in multiple cellular functions, ranging from cell motility, cell cycle progression or cell differentiation to intracellular trafficking and signaling.

It localises to the cytoplasm. It is found in the cytoskeleton. The enzyme catalyses GTP + H2O = GDP + phosphate + H(+). Functionally, tubulin is the major constituent of microtubules, a cylinder consisting of laterally associated linear protofilaments composed of alpha- and beta-tubulin heterodimers. Microtubules grow by the addition of GTP-tubulin dimers to the microtubule end, where a stabilizing cap forms. Below the cap, tubulin dimers are in GDP-bound state, owing to GTPase activity of alpha-tubulin. The protein is Tubulin alpha chain of Euplotoides octocarinatus (Freshwater ciliate).